The primary structure comprises 617 residues: Secretogranin-2 (617 aa).

An N-terminal signal peptide occupies residues 1–30; it reads MAGAKAYRLGAVLLLIHLIFLISGAEAASF. Sulfotyrosine is present on Tyr-153. Phosphoserine occurs at positions 176 and 270. 2 stretches are compositionally biased toward basic and acidic residues: residues 261 to 286 and 295 to 307; these read TQTQ…EMKR and EENR…QLSE. The disordered stretch occupies residues 261–307; it reads TQTQEEVRDSKENTEKNEQINEEMKRSGQLGLPDEENRRESKDQLSE. Ser-434, Ser-532, Ser-555, and Ser-556 each carry phosphoserine.

The protein belongs to the chromogranin/secretogranin protein family. In terms of assembly, interacts with Secretogranin III/SCG3.

It is found in the secreted. Functionally, neuroendocrine protein of the granin family that regulates the biogenesis of secretory granules. This chain is Secretogranin-2 (Scg2), found in Mus musculus (Mouse).